Consider the following 164-residue polypeptide: uncharacterized protein (164 aa).

This is an uncharacterized protein from Methanocaldococcus jannaschii (strain ATCC 43067 / DSM 2661 / JAL-1 / JCM 10045 / NBRC 100440) (Methanococcus jannaschii).